A 298-amino-acid chain; its full sequence is RNA exonuclease 4 (298 aa).

Positions 1–73 form a coiled coil; the sequence is MRKTVRKNKQ…EAKLKLKSAT (73 aa). The region spanning 125–275 is the Exonuclease domain; the sequence is FFSIDCKIIE…RDTIINVILY (151 aa).

This sequence belongs to the REXO4 family.

It localises to the nucleus. This Dictyostelium discoideum (Social amoeba) protein is RNA exonuclease 4 (rexo4).